Here is an 870-residue protein sequence, read N- to C-terminus: Disks large homolog 2 (870 aa).

S-palmitoyl cysteine attachment occurs at residues C5 and C7. The residue at position 28 (S28) is a Phosphoserine. Y58 is modified (phosphotyrosine). S65 carries the phosphoserine modification. PDZ domains are found at residues E98–R184 and E193–P279. S307, S328, S360, S365, S406, and S414 each carry phosphoserine. The PDZ 3 domain maps to K421–Q501. Y505 carries the post-translational modification Phosphotyrosine. A phosphoserine mark is found at S528, S530, S553, S627, and S635. Residues K536 to E606 form the SH3 domain. In terms of domain architecture, Guanylate kinase-like spans T680–E855. Phosphotyrosine occurs at positions 750 and 755.

It belongs to the MAGUK family. In terms of assembly, interacts through its PDZ domains with NETO1. Interacts with NOS1/nNOS through second PDZ domain. Interacts with KCNJ2/Kir2.1 (via C-terminus) through one of its PDZ domains. Interacts with KCNJ4, Interacts with FRMPD4 (via C-terminus). Interacts with LRFN1, LRFN2 and LRFN4. Interacts with FASLG. Interacts with KCNJ4. Interacts with ADAM22. Interacts with DGKI (via PDZ-binding motif). Palmitoylation of isoform 1 is not required for targeting to postsynaptic density.

The protein resides in the cell membrane. Its subcellular location is the postsynaptic density. The protein localises to the synapse. It localises to the membrane. It is found in the cell projection. The protein resides in the axon. Its subcellular location is the perikaryon. Required for perception of chronic pain through NMDA receptor signaling. Regulates surface expression of NMDA receptors in dorsal horn neurons of the spinal cord. Interacts with the cytoplasmic tail of NMDA receptor subunits as well as inward rectifying potassium channels. Involved in regulation of synaptic stability at cholinergic synapses. Part of the postsynaptic protein scaffold of excitatory synapses. This chain is Disks large homolog 2 (DLG2), found in Homo sapiens (Human).